The chain runs to 737 residues: 1,4-alpha-glucan branching enzyme GlgB (737 aa).

D399 functions as the Nucleophile in the catalytic mechanism. E452 functions as the Proton donor in the catalytic mechanism.

This sequence belongs to the glycosyl hydrolase 13 family. GlgB subfamily. As to quaternary structure, monomer.

The catalysed reaction is Transfers a segment of a (1-&gt;4)-alpha-D-glucan chain to a primary hydroxy group in a similar glucan chain.. The protein operates within glycan biosynthesis; glycogen biosynthesis. Catalyzes the formation of the alpha-1,6-glucosidic linkages in glycogen by scission of a 1,4-alpha-linked oligosaccharide from growing alpha-1,4-glucan chains and the subsequent attachment of the oligosaccharide to the alpha-1,6 position. This chain is 1,4-alpha-glucan branching enzyme GlgB, found in Chlamydia muridarum (strain MoPn / Nigg).